The primary structure comprises 74 residues: Delta-actitoxin-Amc3a (74 aa).

The first 19 residues, 1–19 (MNRLIILVVAAVFLGMASA), serve as a signal peptide directing secretion. The propeptide occupies 20 to 24 (EEDVL). At proline 29 the chain carries Hydroxyproline. 3 disulfides stabilise this stretch: cysteine 30–cysteine 70, cysteine 32–cysteine 60, and cysteine 53–cysteine 71. A Glutamine amide modification is found at glutamine 73.

The protein belongs to the sea anemone sodium channel inhibitory toxin family. Type I subfamily.

It is found in the secreted. The protein localises to the nematocyst. Its function is as follows. Inhibits voltage-gated sodium channels (Nav). The sequence is that of Delta-actitoxin-Amc3a from Antheopsis maculata (Sea anemone).